Consider the following 311-residue polypeptide: Aspartate carbamoyltransferase catalytic subunit (311 aa).

Residues Arg55 and Thr56 each coordinate carbamoyl phosphate. Residue Lys85 participates in L-aspartate binding. Residues Arg106, His135, and Gln138 each contribute to the carbamoyl phosphate site. 2 residues coordinate L-aspartate: Arg168 and Arg230. The carbamoyl phosphate site is built by Leu268 and Pro269.

This sequence belongs to the aspartate/ornithine carbamoyltransferase superfamily. ATCase family. Heterododecamer (2C3:3R2) of six catalytic PyrB chains organized as two trimers (C3), and six regulatory PyrI chains organized as three dimers (R2).

The enzyme catalyses carbamoyl phosphate + L-aspartate = N-carbamoyl-L-aspartate + phosphate + H(+). The protein operates within pyrimidine metabolism; UMP biosynthesis via de novo pathway; (S)-dihydroorotate from bicarbonate: step 2/3. Its function is as follows. Catalyzes the condensation of carbamoyl phosphate and aspartate to form carbamoyl aspartate and inorganic phosphate, the committed step in the de novo pyrimidine nucleotide biosynthesis pathway. This chain is Aspartate carbamoyltransferase catalytic subunit, found in Yersinia enterocolitica serotype O:8 / biotype 1B (strain NCTC 13174 / 8081).